The chain runs to 193 residues: uncharacterized protein (193 aa).

A signal peptide spans 1–22 (MAVQKNVIKGILAGTFALMLSG). Residue Cys-23 is the site of N-palmitoyl cysteine attachment. Cys-23 carries the S-diacylglycerol cysteine lipid modification.

It localises to the cell membrane. This is an uncharacterized protein from Escherichia coli (strain K12).